Reading from the N-terminus, the 198-residue chain is Glycerol-3-phosphate acyltransferase (198 aa).

5 helical membrane passes run 2–22 (IIVI…TGYL), 55–75 (MITQ…CMLI), 88–108 (YLSI…FLGF), 118–138 (VGAF…VYFV), and 162–182 (IALR…GLLI).

Belongs to the PlsY family. Probably interacts with PlsX.

The protein resides in the cell membrane. The catalysed reaction is an acyl phosphate + sn-glycerol 3-phosphate = a 1-acyl-sn-glycero-3-phosphate + phosphate. It participates in lipid metabolism; phospholipid metabolism. Functionally, catalyzes the transfer of an acyl group from acyl-phosphate (acyl-PO(4)) to glycerol-3-phosphate (G3P) to form lysophosphatidic acid (LPA). This enzyme utilizes acyl-phosphate as fatty acyl donor, but not acyl-CoA or acyl-ACP. The protein is Glycerol-3-phosphate acyltransferase of Clostridium acetobutylicum (strain ATCC 824 / DSM 792 / JCM 1419 / IAM 19013 / LMG 5710 / NBRC 13948 / NRRL B-527 / VKM B-1787 / 2291 / W).